The chain runs to 144 residues: Flagellar assembly factor FliW (144 aa).

Belongs to the FliW family. As to quaternary structure, interacts with translational regulator CsrA and flagellin(s).

The protein localises to the cytoplasm. Its function is as follows. Acts as an anti-CsrA protein, binds CsrA and prevents it from repressing translation of its target genes, one of which is flagellin. Binds to flagellin and participates in the assembly of the flagellum. This chain is Flagellar assembly factor FliW, found in Bacillus pumilus (strain SAFR-032).